The sequence spans 420 residues: 4-hydroxy-3-methylbut-2-en-1-yl diphosphate synthase (flavodoxin) (420 aa).

[4Fe-4S] cluster contacts are provided by C307, C310, C353, and E360.

Belongs to the IspG family. The cofactor is [4Fe-4S] cluster.

It catalyses the reaction (2E)-4-hydroxy-3-methylbut-2-enyl diphosphate + oxidized [flavodoxin] + H2O + 2 H(+) = 2-C-methyl-D-erythritol 2,4-cyclic diphosphate + reduced [flavodoxin]. Its pathway is isoprenoid biosynthesis; isopentenyl diphosphate biosynthesis via DXP pathway; isopentenyl diphosphate from 1-deoxy-D-xylulose 5-phosphate: step 5/6. Functionally, converts 2C-methyl-D-erythritol 2,4-cyclodiphosphate (ME-2,4cPP) into 1-hydroxy-2-methyl-2-(E)-butenyl 4-diphosphate. The protein is 4-hydroxy-3-methylbut-2-en-1-yl diphosphate synthase (flavodoxin) of Brucella abortus (strain S19).